A 334-amino-acid polypeptide reads, in one-letter code: DNA-directed RNA polymerase subunit alpha (334 aa).

The segment at 1–234 is alpha N-terminal domain (alpha-NTD); sequence MQTKVNELLK…SQLAAFVELQ (234 aa). The segment at 248–334 is alpha C-terminal domain (alpha-CTD); it reads IDPILLRPVD…LKDQDKKASG (87 aa).

Belongs to the RNA polymerase alpha chain family. As to quaternary structure, homodimer. The RNAP catalytic core consists of 2 alpha, 1 beta, 1 beta' and 1 omega subunit. When a sigma factor is associated with the core the holoenzyme is formed, which can initiate transcription.

It catalyses the reaction RNA(n) + a ribonucleoside 5'-triphosphate = RNA(n+1) + diphosphate. Its function is as follows. DNA-dependent RNA polymerase catalyzes the transcription of DNA into RNA using the four ribonucleoside triphosphates as substrates. The polypeptide is DNA-directed RNA polymerase subunit alpha (Thioalkalivibrio sulfidiphilus (strain HL-EbGR7)).